The following is a 120-amino-acid chain: Large ribosomal subunit protein uL18 (120 aa).

This sequence belongs to the universal ribosomal protein uL18 family. Part of the 50S ribosomal subunit; part of the 5S rRNA/L5/L18/L25 subcomplex. Contacts the 5S and 23S rRNAs.

In terms of biological role, this is one of the proteins that bind and probably mediate the attachment of the 5S RNA into the large ribosomal subunit, where it forms part of the central protuberance. The protein is Large ribosomal subunit protein uL18 of Bacillus licheniformis (strain ATCC 14580 / DSM 13 / JCM 2505 / CCUG 7422 / NBRC 12200 / NCIMB 9375 / NCTC 10341 / NRRL NRS-1264 / Gibson 46).